Here is a 356-residue protein sequence, read N- to C-terminus: Tyrosine recombinase XerS (356 aa).

Residues 16 to 121 form the Core-binding (CB) domain; it reads LMPWFVLEYY…ALSSLYKYLT (106 aa). The 186-residue stretch at 169 to 354 folds into the Tyr recombinase domain; the sequence is KFLDYVENEY…VNDEQKNALD (186 aa). Active-site residues include R210, K234, H306, R309, and H332. Y341 (O-(3'-phospho-DNA)-tyrosine intermediate) is an active-site residue.

Belongs to the 'phage' integrase family. XerS subfamily.

The protein resides in the cytoplasm. FtsK is required for recombination. Its function is as follows. Site-specific tyrosine recombinase, which acts by catalyzing the cutting and rejoining of the recombining DNA molecules. Essential to convert dimers of the bacterial chromosome into monomers to permit their segregation at cell division. This chain is Tyrosine recombinase XerS, found in Streptococcus thermophilus (strain ATCC BAA-491 / LMD-9).